Here is a 1272-residue protein sequence, read N- to C-terminus: uncharacterized protein (1272 aa).

3 coiled-coil regions span residues 185–212 (IEFL…EAVN), 246–274 (KNSA…YLDA), and 607–640 (ALGK…NTVI). Residues 1179-1231 (ELPETSQQPVVPTPPATRPSSPIPPESDILTEEEQLEEQPPRQQQATRKTTTT) are disordered. Residues 1189–1203 (VPTPPATRPSSPIPP) are compositionally biased toward pro residues. Low complexity predominate over residues 1219–1231 (PRQQQATRKTTTT).

This is an uncharacterized protein from Magallana gigas (Pacific oyster).